Reading from the N-terminus, the 110-residue chain is Parvalbumin alpha (110 aa).

EF-hand domains lie at 39 to 74 and 78 to 110; these read KGPD…FTPN and LSVK…VSES. Residues D52, D54, S56, F58, E60, E63, D91, D93, D95, K97, and E102 each contribute to the Ca(2+) site.

Belongs to the parvalbumin family.

Functionally, in muscle, parvalbumin is thought to be involved in relaxation after contraction. It binds two calcium ions. This Aquarana catesbeiana (American bullfrog) protein is Parvalbumin alpha.